The chain runs to 219 residues: Elongation factor Ts (219 aa).

An involved in Mg(2+) ion dislocation from EF-Tu region spans residues 83–86 (TDFV).

Belongs to the EF-Ts family.

Its subcellular location is the cytoplasm. Functionally, associates with the EF-Tu.GDP complex and induces the exchange of GDP to GTP. It remains bound to the aminoacyl-tRNA.EF-Tu.GTP complex up to the GTP hydrolysis stage on the ribosome. This chain is Elongation factor Ts, found in Synechococcus sp. (strain WH7803).